Reading from the N-terminus, the 327-residue chain is Endochitinase CH5B (327 aa).

The first 26 residues, 1–26 (MKKNRMMIMICSVGVVWMLLVGGSYG), serve as a signal peptide directing secretion. Residues 27–67 (EQCGRQAGGALCPGGNCCSQFGWCGSTTDYCGKDCQSQCGG) form the Chitin-binding type-1 domain. 7 cysteine pairs are disulfide-bonded: Cys29-Cys44, Cys38-Cys50, Cys43-Cys57, Cys61-Cys65, Cys96-Cys158, Cys169-Cys177, and Cys276-Cys308. Residue Glu140 is the Proton donor of the active site. Residues 317–327 (SLFLSDLVTSQ) constitute a propeptide, removed in mature form.

It belongs to the glycosyl hydrolase 19 family. Chitinase class I subfamily.

It localises to the vacuole. It catalyses the reaction Random endo-hydrolysis of N-acetyl-beta-D-glucosaminide (1-&gt;4)-beta-linkages in chitin and chitodextrins.. Functionally, defense against chitin-containing fungal pathogens. The protein is Endochitinase CH5B of Phaseolus vulgaris (Kidney bean).